Reading from the N-terminus, the 428-residue chain is Aspartate--tRNA(Asp) ligase (428 aa).

E166 is a binding site for L-aspartate. The aspartate stretch occupies residues 188-191; sequence QLYK. R210 provides a ligand contact to L-aspartate. ATP is bound by residues 210–212, 218–220, and E351; these read RAE and RHL. Residues E351 and S354 each coordinate Mg(2+). Positions 354 and 358 each coordinate L-aspartate. 399–402 is an ATP binding site; it reads GLER.

Belongs to the class-II aminoacyl-tRNA synthetase family. Type 2 subfamily. As to quaternary structure, homodimer. It depends on Mg(2+) as a cofactor.

It is found in the cytoplasm. The catalysed reaction is tRNA(Asp) + L-aspartate + ATP = L-aspartyl-tRNA(Asp) + AMP + diphosphate. Catalyzes the attachment of L-aspartate to tRNA(Asp) in a two-step reaction: L-aspartate is first activated by ATP to form Asp-AMP and then transferred to the acceptor end of tRNA(Asp). The protein is Aspartate--tRNA(Asp) ligase of Thermoplasma volcanium (strain ATCC 51530 / DSM 4299 / JCM 9571 / NBRC 15438 / GSS1).